The chain runs to 479 residues: Nucleoside-diphosphatase uda-1 (479 aa).

Residues 1 to 7 are Cytoplasmic-facing; it reads MLFPAFS. A helical; Signal-anchor for type II membrane protein membrane pass occupies residues 8–24; sequence ILLISFFSLLSVVTTKT. Residues 25–479 lie on the Lumenal side of the membrane; that stretch reads QYWCHGDGVL…VLSYFNIISV (455 aa). The Proton acceptor role is filled by Glu-171. Residues Asn-300 and Asn-452 are each glycosylated (N-linked (GlcNAc...) asparagine).

It belongs to the GDA1/CD39 NTPase family. The cofactor is Ca(2+). Requires Mg(2+) as cofactor. Mn(2+) is required as a cofactor.

The protein resides in the endomembrane system. It carries out the reaction a ribonucleoside 5'-diphosphate + H2O = a ribonucleoside 5'-phosphate + phosphate + H(+). Its function is as follows. Hydrolyzes UDP and GDP but not any other nucleoside di-, mono- or triphosphates. May promote reglycosylation reactions involved in glycoproteins folding and quality control in the endoplasmic reticulum. This chain is Nucleoside-diphosphatase uda-1 (uda-1), found in Caenorhabditis elegans.